Reading from the N-terminus, the 93-residue chain is Large ribosomal subunit protein uL23 (93 aa).

This sequence belongs to the universal ribosomal protein uL23 family. As to quaternary structure, part of the 50S ribosomal subunit. Contacts protein L29, and trigger factor when it is bound to the ribosome.

Functionally, one of the early assembly proteins it binds 23S rRNA. One of the proteins that surrounds the polypeptide exit tunnel on the outside of the ribosome. Forms the main docking site for trigger factor binding to the ribosome. This chain is Large ribosomal subunit protein uL23, found in Campylobacter curvus (strain 525.92).